A 345-amino-acid chain; its full sequence is L-threonine 3-dehydrogenase (345 aa).

Cys-42 is a Zn(2+) binding site. Catalysis depends on charge relay system residues Thr-44 and His-47. Zn(2+) contacts are provided by His-67, Glu-68, Cys-97, Cys-100, Cys-103, and Cys-111. Residues Ile-179, Asp-199, Arg-204, 266–268 (LGI), and 290–291 (IY) contribute to the NAD(+) site.

Belongs to the zinc-containing alcohol dehydrogenase family. In terms of assembly, homotetramer. Zn(2+) is required as a cofactor.

It is found in the cytoplasm. The enzyme catalyses L-threonine + NAD(+) = (2S)-2-amino-3-oxobutanoate + NADH + H(+). It functions in the pathway amino-acid degradation; L-threonine degradation via oxydo-reductase pathway; glycine from L-threonine: step 1/2. Its function is as follows. Catalyzes the NAD(+)-dependent oxidation of L-threonine to 2-amino-3-ketobutyrate. The chain is L-threonine 3-dehydrogenase from Sinorhizobium fredii (strain NBRC 101917 / NGR234).